We begin with the raw amino-acid sequence, 424 residues long: Histidine--tRNA ligase (424 aa).

Belongs to the class-II aminoacyl-tRNA synthetase family. As to quaternary structure, homodimer.

It is found in the cytoplasm. The enzyme catalyses tRNA(His) + L-histidine + ATP = L-histidyl-tRNA(His) + AMP + diphosphate + H(+). The chain is Histidine--tRNA ligase from Yersinia pestis bv. Antiqua (strain Antiqua).